The chain runs to 432 residues: Ribosomal protein uS12 methylthiotransferase RimO (432 aa).

The region spanning 4-120 is the MTTase N-terminal domain; sequence HNVFLLSLGC…LLQAIGAQYR (117 aa). [4Fe-4S] cluster is bound by residues C13, C49, C83, C144, C148, and C151. The region spanning 130-359 is the Radical SAM core domain; that stretch reads LTPPHISYLK…MELQETIAKE (230 aa). The region spanning 362-429 is the TRAM domain; it reads QLFEGKELTV…AYELHGTITA (68 aa).

This sequence belongs to the methylthiotransferase family. RimO subfamily. [4Fe-4S] cluster serves as cofactor.

Its subcellular location is the cytoplasm. The catalysed reaction is L-aspartate(89)-[ribosomal protein uS12]-hydrogen + (sulfur carrier)-SH + AH2 + 2 S-adenosyl-L-methionine = 3-methylsulfanyl-L-aspartate(89)-[ribosomal protein uS12]-hydrogen + (sulfur carrier)-H + 5'-deoxyadenosine + L-methionine + A + S-adenosyl-L-homocysteine + 2 H(+). Catalyzes the methylthiolation of an aspartic acid residue of ribosomal protein uS12. The chain is Ribosomal protein uS12 methylthiotransferase RimO from Chlorobium phaeobacteroides (strain DSM 266 / SMG 266 / 2430).